The primary structure comprises 200 residues: Recombination protein RecR (200 aa).

The segment at 58-75 (CPDCFCLKTSKTSSCDFC) adopts a C4-type zinc-finger fold. The region spanning 82-177 (SFLCIVATPK…KISRLALGMP (96 aa)) is the Toprim domain.

This sequence belongs to the RecR family.

In terms of biological role, may play a role in DNA repair. It seems to be involved in an RecBC-independent recombinational process of DNA repair. It may act with RecF and RecO. This Chlamydia muridarum (strain MoPn / Nigg) protein is Recombination protein RecR.